Here is a 353-residue protein sequence, read N- to C-terminus: MTAILERRESASVWGRFCNWITSTENRLYIGWFGVLMIPTLLTATSVFIIAFIAAPPVDIDGIREPVAGSLLYGNNIISGAIIPTSAAIGLHFYPIWEASSVDEWLYNGGPYELIVLHFLLGVACYMGREWELSFRLGMRPWIAVAYSAPVAAATAVFLIYPIGQGSFSDGMPLGISGTFNFMIVFQAEHNILMHPFHMLGVAGVFGGSLFSAMHGSLVTSSLIRETTESESANAGYKFGQEEETYNIVAAHGYFGRLIFQYASFNNSRSLHFFLAAWPVVGIWFTALGISTMAFNLNGFNFNQSVVDSQGRVINTWADIINRANLGMEVMHERNAHNFPLDLASVELDSIDG.

The residue at position 2 (Thr-2) is an N-acetylthreonine. Position 2 is a phosphothreonine (Thr-2). A run of 3 helical transmembrane segments spans residues 29 to 46 (YIGWFGVLMIPTLLTATS), 118 to 133 (HFLLGVACYMGREWEL), and 142 to 156 (WIAVAYSAPVAAATA). His-118 is a binding site for chlorophyll a. Tyr-126 lines the pheophytin a pocket. Positions 170 and 189 each coordinate [CaMn4O5] cluster. Residues 197 to 218 (FHMLGVAGVFGGSLFSAMHGSL) form a helical membrane-spanning segment. His-198 is a binding site for chlorophyll a. Residues His-215 and 264–265 (SF) each bind a quinone. A Fe cation-binding site is contributed by His-215. His-272 contributes to the Fe cation binding site. A helical transmembrane segment spans residues 274-288 (FLAAWPVVGIWFTAL). The [CaMn4O5] cluster site is built by His-332, Glu-333, Asp-342, and Ala-344. Residues 345-353 (SVELDSIDG) constitute a propeptide that is removed on maturation.

This sequence belongs to the reaction center PufL/M/PsbA/D family. In terms of assembly, PSII is composed of 1 copy each of membrane proteins PsbA, PsbB, PsbC, PsbD, PsbE, PsbF, PsbH, PsbI, PsbJ, PsbK, PsbL, PsbM, PsbT, PsbX, PsbY, PsbZ, Psb30/Ycf12, at least 3 peripheral proteins of the oxygen-evolving complex and a large number of cofactors. It forms dimeric complexes. It depends on The D1/D2 heterodimer binds P680, chlorophylls that are the primary electron donor of PSII, and subsequent electron acceptors. It shares a non-heme iron and each subunit binds pheophytin, quinone, additional chlorophylls, carotenoids and lipids. D1 provides most of the ligands for the Mn4-Ca-O5 cluster of the oxygen-evolving complex (OEC). There is also a Cl(-1) ion associated with D1 and D2, which is required for oxygen evolution. The PSII complex binds additional chlorophylls, carotenoids and specific lipids. as a cofactor. Post-translationally, tyr-161 forms a radical intermediate that is referred to as redox-active TyrZ, YZ or Y-Z. C-terminally processed by CTPA; processing is essential to allow assembly of the oxygen-evolving complex and thus photosynthetic growth.

It localises to the plastid. The protein resides in the chloroplast thylakoid membrane. The catalysed reaction is 2 a plastoquinone + 4 hnu + 2 H2O = 2 a plastoquinol + O2. Functionally, photosystem II (PSII) is a light-driven water:plastoquinone oxidoreductase that uses light energy to abstract electrons from H(2)O, generating O(2) and a proton gradient subsequently used for ATP formation. It consists of a core antenna complex that captures photons, and an electron transfer chain that converts photonic excitation into a charge separation. The D1/D2 (PsbA/PsbD) reaction center heterodimer binds P680, the primary electron donor of PSII as well as several subsequent electron acceptors. The chain is Photosystem II protein D1 from Gnetum parvifolium (Small-leaved jointfir).